Reading from the N-terminus, the 500-residue chain is L-arabinose isomerase (500 aa).

Glu306, Glu331, His348, and His447 together coordinate Mn(2+).

This sequence belongs to the arabinose isomerase family. Mn(2+) serves as cofactor.

The catalysed reaction is beta-L-arabinopyranose = L-ribulose. The protein operates within carbohydrate degradation; L-arabinose degradation via L-ribulose; D-xylulose 5-phosphate from L-arabinose (bacterial route): step 1/3. Catalyzes the conversion of L-arabinose to L-ribulose. This is L-arabinose isomerase from Anoxybacillus flavithermus (strain DSM 21510 / WK1).